The primary structure comprises 997 residues: Translation initiation factor IF-2 (997 aa).

The tract at residues 101 to 406 (ELAAEQAAAR…SRNQHQDRRH (306 aa)) is disordered. 2 stretches are compositionally biased toward low complexity: residues 116–185 (AEAV…QAEP) and 195–209 (AAPAQAVAEPVEPAK). Residues 231–242 (TELTSQTPTPVA) are compositionally biased toward polar residues. Over residues 256 to 280 (AEPAAAPKTTAKPGEIRRAAAPAAP) the composition is skewed to low complexity. Positions 281 to 292 (DRAREEARRAAE) are enriched in basic and acidic residues. Over residues 385 to 394 (RAGGKGGRGG) the composition is skewed to gly residues. Residues 498 to 665 (PRAPVVTVMG…NVLLQAEILE (168 aa)) enclose the tr-type G domain. Positions 507–514 (GHVDHGKT) are G1. Position 507–514 (507–514 (GHVDHGKT)) interacts with GTP. The segment at 532-536 (GITQH) is G2. The G3 stretch occupies residues 553–556 (DTPG). Residues 553 to 557 (DTPGH) and 607 to 610 (NKID) each bind GTP. A G4 region spans residues 607 to 610 (NKID). A G5 region spans residues 643 to 645 (SAK).

Belongs to the TRAFAC class translation factor GTPase superfamily. Classic translation factor GTPase family. IF-2 subfamily.

It is found in the cytoplasm. Its function is as follows. One of the essential components for the initiation of protein synthesis. Protects formylmethionyl-tRNA from spontaneous hydrolysis and promotes its binding to the 30S ribosomal subunits. Also involved in the hydrolysis of GTP during the formation of the 70S ribosomal complex. This Bordetella pertussis (strain Tohama I / ATCC BAA-589 / NCTC 13251) protein is Translation initiation factor IF-2.